We begin with the raw amino-acid sequence, 491 residues long: Maintenance of mitochondrial morphology protein 1 (491 aa).

The Lumenal segment spans residues 1–22 (MTFQQNEPSAVPAQSSLSFTQG). A helical transmembrane segment spans residues 23–43 (FLLGQLSVVLLIGAFIKFFIF). Residues 44-491 (GEAPPPPSRG…GTLPGGAAAN (448 aa)) lie on the Cytoplasmic side of the membrane. Disordered stretches follow at residues 50-95 (PSRG…PVPS), 275-325 (PPLH…SPKS), and 392-491 (RTGV…AAAN). The span at 54–64 (LSHRASTHRRS) shows a compositional bias: basic residues. 2 stretches are compositionally biased toward polar residues: residues 65 to 78 (NSIYTINPNEGTSR) and 85 to 95 (STSNVLRPVPS). The SMP-LTD domain occupies 131–384 (QPESLDWFNV…EPRVQVVGLP (254 aa)). Residues 275–287 (PPLHTPSPSPSPP) are compositionally biased toward pro residues. Polar residues-rich tracts occupy residues 300–315 (TNGSREPTQEAPNAQE) and 403–412 (TGSNAASRSA). The span at 422–434 (RADDIGREPDGLR) shows a compositional bias: basic and acidic residues.

The protein belongs to the MMM1 family. In terms of assembly, homodimer. Component of the ER-mitochondria encounter structure (ERMES) or MDM complex, composed of mmm1, mdm10, mdm12 and mdm34. A mmm1 homodimer associates with one molecule of mdm12 on each side in a pairwise head-to-tail manner, and the SMP-LTD domains of mmm1 and mdm12 generate a continuous hydrophobic tunnel for phospholipid trafficking.

The protein resides in the endoplasmic reticulum membrane. In terms of biological role, component of the ERMES/MDM complex, which serves as a molecular tether to connect the endoplasmic reticulum (ER) and mitochondria. Components of this complex are involved in the control of mitochondrial shape and protein biogenesis, and function in nonvesicular lipid trafficking between the ER and mitochondria. The mdm12-mmm1 subcomplex functions in the major beta-barrel assembly pathway that is responsible for biogenesis of all outer membrane beta-barrel proteins, and acts in a late step after the SAM complex. The mdm10-mdm12-mmm1 subcomplex further acts in the TOM40-specific pathway after the action of the mdm12-mmm1 complex. Essential for establishing and maintaining the structure of mitochondria and maintenance of mtDNA nucleoids. The polypeptide is Maintenance of mitochondrial morphology protein 1 (Aspergillus flavus (strain ATCC 200026 / FGSC A1120 / IAM 13836 / NRRL 3357 / JCM 12722 / SRRC 167)).